The chain runs to 312 residues: Cytochrome c biogenesis protein CcsA (312 aa).

8 helical membrane-spanning segments follow: residues 12 to 32, 47 to 67, 72 to 92, 98 to 118, 144 to 164, 220 to 240, 254 to 271, and 281 to 301; these read NLVF…LSFF, IVAN…AGYF, LYES…YVEF, LVGA…NLTL, MMLS…FLVI, IIGL…VWAN, TWAL…HSRI, and AILG…VNFL.

This sequence belongs to the CcmF/CycK/Ccl1/NrfE/CcsA family. May interact with Ccs1.

Its subcellular location is the plastid. The protein localises to the chloroplast thylakoid membrane. Required during biogenesis of c-type cytochromes (cytochrome c6 and cytochrome f) at the step of heme attachment. The protein is Cytochrome c biogenesis protein CcsA of Trieres chinensis (Marine centric diatom).